The sequence spans 238 residues: Ribonuclease PH (238 aa).

Phosphate contacts are provided by residues Arg86 and 124-126 (GTR).

It belongs to the RNase PH family. Homohexameric ring arranged as a trimer of dimers.

The catalysed reaction is tRNA(n+1) + phosphate = tRNA(n) + a ribonucleoside 5'-diphosphate. Its function is as follows. Phosphorolytic 3'-5' exoribonuclease that plays an important role in tRNA 3'-end maturation. Removes nucleotide residues following the 3'-CCA terminus of tRNAs; can also add nucleotides to the ends of RNA molecules by using nucleoside diphosphates as substrates, but this may not be physiologically important. Probably plays a role in initiation of 16S rRNA degradation (leading to ribosome degradation) during starvation. The chain is Ribonuclease PH from Hahella chejuensis (strain KCTC 2396).